The sequence spans 280 residues: Tryptophan synthase alpha chain (280 aa).

Catalysis depends on proton acceptor residues E49 and D60.

Belongs to the TrpA family. As to quaternary structure, tetramer of two alpha and two beta chains.

The catalysed reaction is (1S,2R)-1-C-(indol-3-yl)glycerol 3-phosphate + L-serine = D-glyceraldehyde 3-phosphate + L-tryptophan + H2O. It participates in amino-acid biosynthesis; L-tryptophan biosynthesis; L-tryptophan from chorismate: step 5/5. Functionally, the alpha subunit is responsible for the aldol cleavage of indoleglycerol phosphate to indole and glyceraldehyde 3-phosphate. The chain is Tryptophan synthase alpha chain from Corynebacterium glutamicum (strain ATCC 13032 / DSM 20300 / JCM 1318 / BCRC 11384 / CCUG 27702 / LMG 3730 / NBRC 12168 / NCIMB 10025 / NRRL B-2784 / 534).